A 91-amino-acid chain; its full sequence is UPF0250 protein NGK_1021 (91 aa).

This sequence belongs to the UPF0250 family.

This is UPF0250 protein NGK_1021 from Neisseria gonorrhoeae (strain NCCP11945).